The chain runs to 175 residues: Peptide deformylase (175 aa).

Residues cysteine 99 and histidine 141 each contribute to the Fe cation site. Residue glutamate 142 is part of the active site. Histidine 145 contributes to the Fe cation binding site.

It belongs to the polypeptide deformylase family. Fe(2+) is required as a cofactor.

The enzyme catalyses N-terminal N-formyl-L-methionyl-[peptide] + H2O = N-terminal L-methionyl-[peptide] + formate. Its function is as follows. Removes the formyl group from the N-terminal Met of newly synthesized proteins. Requires at least a dipeptide for an efficient rate of reaction. N-terminal L-methionine is a prerequisite for activity but the enzyme has broad specificity at other positions. The sequence is that of Peptide deformylase from Rickettsia prowazekii (strain Madrid E).